The following is a 247-amino-acid chain: Ubiquinone biosynthesis O-methyltransferase (247 aa).

S-adenosyl-L-methionine-binding residues include R39, G70, D91, and M134.

This sequence belongs to the methyltransferase superfamily. UbiG/COQ3 family.

The catalysed reaction is a 3-demethylubiquinol + S-adenosyl-L-methionine = a ubiquinol + S-adenosyl-L-homocysteine + H(+). It carries out the reaction a 3-(all-trans-polyprenyl)benzene-1,2-diol + S-adenosyl-L-methionine = a 2-methoxy-6-(all-trans-polyprenyl)phenol + S-adenosyl-L-homocysteine + H(+). It participates in cofactor biosynthesis; ubiquinone biosynthesis. Functionally, O-methyltransferase that catalyzes the 2 O-methylation steps in the ubiquinone biosynthetic pathway. This Cereibacter sphaeroides (strain ATCC 17025 / ATH 2.4.3) (Rhodobacter sphaeroides) protein is Ubiquinone biosynthesis O-methyltransferase.